Consider the following 328-residue polypeptide: Formyltetrahydrofolate deformylase 2, mitochondrial (328 aa).

A mitochondrion-targeting transit peptide spans 1-12 (MIRRVSTTSCLS). The ACT domain occupies 46 to 129 (FHVFHCPDVV…SVVRVPSLDP (84 aa)). Asp-272 is a catalytic residue.

Belongs to the PurU family. Expressed in leaves, cotyledons, roots, seeds and flowers.

It is found in the mitochondrion. It carries out the reaction (6R)-10-formyltetrahydrofolate + H2O = (6S)-5,6,7,8-tetrahydrofolate + formate + H(+). In terms of biological role, deformylase involved in photorespiration. Prevents excessive accumulation of 5-formyl tetrahydrofolate (THF), a potent inhibitor of the Gly decarboxylase/Ser hydroxymethyltransferase complex. The chain is Formyltetrahydrofolate deformylase 2, mitochondrial (PURU2) from Arabidopsis thaliana (Mouse-ear cress).